Here is a 543-residue protein sequence, read N- to C-terminus: Bifunctional purine biosynthesis protein PurH (543 aa).

Residues 5–151 form the MGS-like domain; that stretch reads NHARPIRRAL…KNHKDVTIVV (147 aa).

This sequence belongs to the PurH family.

It carries out the reaction (6R)-10-formyltetrahydrofolate + 5-amino-1-(5-phospho-beta-D-ribosyl)imidazole-4-carboxamide = 5-formamido-1-(5-phospho-D-ribosyl)imidazole-4-carboxamide + (6S)-5,6,7,8-tetrahydrofolate. The enzyme catalyses IMP + H2O = 5-formamido-1-(5-phospho-D-ribosyl)imidazole-4-carboxamide. It participates in purine metabolism; IMP biosynthesis via de novo pathway; 5-formamido-1-(5-phospho-D-ribosyl)imidazole-4-carboxamide from 5-amino-1-(5-phospho-D-ribosyl)imidazole-4-carboxamide (10-formyl THF route): step 1/1. Its pathway is purine metabolism; IMP biosynthesis via de novo pathway; IMP from 5-formamido-1-(5-phospho-D-ribosyl)imidazole-4-carboxamide: step 1/1. This chain is Bifunctional purine biosynthesis protein PurH, found in Shewanella oneidensis (strain ATCC 700550 / JCM 31522 / CIP 106686 / LMG 19005 / NCIMB 14063 / MR-1).